Reading from the N-terminus, the 314-residue chain is tRNA uridine(34) hydroxylase (314 aa).

Positions 140-234 constitute a Rhodanese domain; the sequence is ARDDVILIDT…YLEETPPDES (95 aa). C194 functions as the Cysteine persulfide intermediate in the catalytic mechanism.

This sequence belongs to the TrhO family.

The enzyme catalyses uridine(34) in tRNA + AH2 + O2 = 5-hydroxyuridine(34) in tRNA + A + H2O. In terms of biological role, catalyzes oxygen-dependent 5-hydroxyuridine (ho5U) modification at position 34 in tRNAs. This chain is tRNA uridine(34) hydroxylase, found in Acinetobacter baumannii (strain SDF).